The following is a 186-amino-acid chain: ADP-ribosylation factor-like protein 8B (186 aa).

Met-1 carries the N-acetylmethionine modification. An intramembrane region (note=Mediates targeting to membranes) is located at residues 1–19 (MLALISRLLDWFRSLFWKE). GTP-binding positions include 29-35 (QYSGKTT), 71-75 (DIGGQ), and 130-133 (NKRD). A Glycyl lysine isopeptide (Lys-Gly) (interchain with G-Cter in ubiquitin) cross-link involves residue Lys-141.

This sequence belongs to the small GTPase superfamily. Arf family. As to quaternary structure, interacts with tubulin. Interacts with BORCS5; recruits ARL8B to lysosomes. Interacts with VPS41; the interaction mediates the recruitment of the HOPS complex to lysosomes. Interacts (GTP-bound form) with PLEKHM2 (via RUN domain); the interaction is required to recruit the motor protein kinesin-1 on lysosomes. Interacts (GTP-bound form) with PLEKHM1 (via RUN domain); the interaction is required for PLEKHM1 localization to lysosomes and for ARL8B function in delivery and degradation of endocytic and autophagic cargo in lysosomes. PLEKHM1 and PLEKHM2 compete for interaction with ARL8B. Interacts (GTP-bound form) with RUFY1; the interaction is required for RUFY1 endosomal location. When GTP-bound, interacts with RUFY3 and RUFY4, but not with RUFY1, nor RUFY2. Post-translationally, ubiquitinated at Lys-141 by RNF167, leading to its degradation. In terms of tissue distribution, ubiquitously expressed.

The protein resides in the late endosome membrane. Its subcellular location is the lysosome membrane. The protein localises to the cytoplasm. It localises to the cytoskeleton. It is found in the spindle. The protein resides in the cell projection. Its subcellular location is the axon. The protein localises to the synapse. It localises to the cytolytic granule membrane. It is found in the early endosome membrane. It carries out the reaction GTP + H2O = GDP + phosphate + H(+). In terms of biological role, small GTPase which cycles between active GTP-bound and inactive GDP-bound states. In its active state, binds to a variety of effector proteins playing a key role in the regulation of lysosomal positioning which is important for nutrient sensing, natural killer cell-mediated cytotoxicity and antigen presentation. Along with its effectors, orchestrates lysosomal transport and fusion. Localizes specifically to lysosomal membranes and mediates anterograde lysosomal motility by recruiting PLEKHM2, which in turn recruits the motor protein kinesin-1 on lysosomes. Required for lysosomal and cytolytic granule exocytosis. Critical factor involved in NK cell-mediated cytotoxicity. Drives the polarization of cytolytic granules and microtubule-organizing centers (MTOCs) toward the immune synapse between effector NK lymphocytes and target cells. In neurons, mediates the anterograde axonal long-range transport of presynaptic lysosome-related vesicles required for presynaptic biogenesis and synaptic function. Also acts as a regulator of endosome to lysosome trafficking pathways of special significance for host defense. Recruits RUFY1 onto early endosomes regulating endosomes to trans-Golgi network proteins retrieval. Regulates cargo trafficking to lysosomes by binding to PLEKHM1 and recruiting the HOPS subunit VPS41, resulting in functional assembly of the HOPS complex on lysosomal membranes. Plays an important role in cargo delivery to lysosomes for antigen presentation and microbial killing. Directs the intersection of CD1d with lipid antigens in lysosomes, and plays a role in intersecting phagosomes with lysosomes to generate phagolysosomes that kill microbes. Involved in the process of MHC II presentation. Regulates the delivery of antigens to lysosomes and the formation of MHC II-peptide complexes through the recruitment of the HOPS complex to lysosomes allowing the fusion of late endosomes to lysosomes. May play a role in chromosome segregation. (Microbial infection) During Mycobacterium tuberculosis (Mtb) infection, is required for plasma membrane repair by controlling the exocytosis of lysosomes in macrophages. ARL8B secretion pathway is crucial to control the type of cell death of the M.tuberculosis-infected macrophages, distinguishing avirulent from virulent Mtb induced necrotic cell death. Functionally, (Microbial infection) During infection, coronaviruses such as SARS-CoV-2 and the chaperone HSPA5/GRP78 are probably co-released through ARL8B-dependent lysosomal exocytic pathway for unconventional egress. This Homo sapiens (Human) protein is ADP-ribosylation factor-like protein 8B.